The following is a 120-amino-acid chain: Large ribosomal subunit protein uL18 (120 aa).

This sequence belongs to the universal ribosomal protein uL18 family. In terms of assembly, part of the 50S ribosomal subunit; part of the 5S rRNA/L5/L18/L25 subcomplex. Contacts the 5S and 23S rRNAs.

In terms of biological role, this is one of the proteins that bind and probably mediate the attachment of the 5S RNA into the large ribosomal subunit, where it forms part of the central protuberance. This chain is Large ribosomal subunit protein uL18, found in Geobacillus sp. (strain WCH70).